We begin with the raw amino-acid sequence, 238 residues long: Large ribosomal subunit protein uL2 (238 aa).

The interval 200 to 238 (HGGGLHQSVSRPSTVSRNAPPGRKVGHIAARRTGRKEGK) is disordered. Polar residues predominate over residues 206-216 (QSVSRPSTVSR). Residues 223 to 238 (KVGHIAARRTGRKEGK) are compositionally biased toward basic residues.

The protein belongs to the universal ribosomal protein uL2 family. Part of the 50S ribosomal subunit. Forms a bridge to the 30S subunit in the 70S ribosome.

One of the primary rRNA binding proteins. Required for association of the 30S and 50S subunits to form the 70S ribosome, for tRNA binding and peptide bond formation. It has been suggested to have peptidyltransferase activity; this is somewhat controversial. Makes several contacts with the 16S rRNA in the 70S ribosome. The chain is Large ribosomal subunit protein uL2 from Saccharolobus islandicus (strain Y.N.15.51 / Yellowstone #2) (Sulfolobus islandicus).